A 545-amino-acid polypeptide reads, in one-letter code: Mitogen-activated protein kinase kinase kinase mom-4 (545 aa).

The segment covering 1 to 21 has biased composition (low complexity); the sequence is MDTSPHSKPSSSSASQSSHSP. Residues 1 to 35 form a disordered region; sequence MDTSPHSKPSSSSASQSSHSPSPAPVTAPRKTRDS. Residues 53-308 enclose the Protein kinase domain; that stretch reads NLNSHQLGRG…AECLQYFTAL (256 aa). ATP-binding positions include 59–67 and K86; that span reads LGRGTYGIV. The Proton acceptor role is filled by D178. The interval 316-444 is disordered; it reads NVPLADANTN…PIDDRRDSNE (129 aa). Composition is skewed to polar residues over residues 352 to 369 and 396 to 411; these read NGRTPTASNHLNAPQAVN and ASSSGAFRGPRSQSEA.

This sequence belongs to the protein kinase superfamily. STE Ser/Thr protein kinase family. MAP kinase kinase kinase subfamily. Interacts with, and is activated by, tap-1. Requires Mg(2+) as cofactor.

It catalyses the reaction L-seryl-[protein] + ATP = O-phospho-L-seryl-[protein] + ADP + H(+). It carries out the reaction L-threonyl-[protein] + ATP = O-phospho-L-threonyl-[protein] + ADP + H(+). Its function is as follows. Part of the Wnt signaling pathway essential for the specification of the mesodermal cell fate in early embryos. Stimulates the wrm-1/lit-1-dependent phosphorylation of pop-1 and plays a role in the initial nuclear accumulation of wrm-1. This is Mitogen-activated protein kinase kinase kinase mom-4 from Caenorhabditis briggsae.